A 213-amino-acid chain; its full sequence is Inactive ribonuclease-like protein 10 (213 aa).

The N-terminal stretch at 1 to 24 (MKLTLVQIFFMMLLLLLGLGMGLG) is a signal peptide. An N-linked (GlcNAc...) asparagine glycan is attached at Asn-131.

It belongs to the pancreatic ribonuclease family. Post-translationally, the N-terminus is blocked. Glycosylated. Male-specific expression in proximal caput of the epididymis.

It is found in the secreted. Functionally, secreted proximal epididymal protein required for post-testicular sperm maturation and male fertility. May be involved in sperm adhesion to the egg zona pellucida. Does not have ribonuclease activity. This Equus caballus (Horse) protein is Inactive ribonuclease-like protein 10 (RNASE10).